A 997-amino-acid polypeptide reads, in one-letter code: MKDGGESKEQQLTVALRIRPINETELAEGATIIAHKVDKQMVVLMDPMEDSDDILRANRSREKSYMFDVAFDYTATQDTVYRFTTKGLIEGVISGYNATVFAYGPTGCGKTYTMLGTDWEPGIYIRTLNDLFKAIEETSDDMEYEVLMSYMEIYNEMIRDLLNPSLGYLDLREDSKGVIQVAGITEVSTINAKEIMQLLMKGNRQRTQEPTAANKTSSRSHAILQVTVRQKSRVKNITQEVRVGRLFMIDLAGSERASQTQNRGLRMKEGAHINRSLLALGNCINALSERGSNKYVNYRDSKLTRLLKDSLGGNSRTVMIAHISPASTSFEESRNTLTYADRAKNIKTRVKRNLLNVSYHIAQYTSIISDLRKEIQRLKKKIDEQGLKQIRSEKSDIRNIQAEVQLHSSTYGRHEMEQLKEQLIRAFREQMDIRRQLMEIENSSMEMQMETSRHFLITAEWEQEKTRRARKWRDEHRKETYGKDDSEKDSDTGDDQSDFIEPPEVITARETIQILEGDQNKLRRQKLELEKRFRDVRHHARRLEEALPKRISSDDQREILSLLCKVHELEIENTEMQSHALLKDNMIRQKDYMVQRFEQHRSLCDEIIQQQRRIIYDHNLTVPHQLNDLYELYFRELEEGVLDKAAVLALKDSQSCLPKIPNLTAEENLQEPDSDQESVRTFGSDNRNPIHRDSYKNLLPQILSETDSDTNKVFKTSPRARHLKNGAVVTPPPIHVNGIISKEYLPRNQINYFPDSTDSKVVLTHREKKEITTSIQSIAVKAARRRSRVLEGDRLQPMKERSNLSVHSMSESEDTVFTDQRFPSSSLHHAASEDNLSSTTGEIVAVHGGGSNHRDSPNLWHRTQKKQAQKLEKREESLEVKRRKKRSRSFEVTGQGLVRPKNHISRNRALESNSDHKIQSNTLQTNRKIMLPIAQVKLPQNQTTTVFKMAEQQEGKHQTNQPGSVKKLISTNQPPRFNYINANASGIYVKDVRVRKY.

The 336-residue stretch at 11-346 folds into the Kinesin motor domain; the sequence is QLTVALRIRP…LTYADRAKNI (336 aa). Position 104 to 111 (104 to 111) interacts with ATP; it reads GPTGCGKT. Residues 360–437 are a coiled coil; that stretch reads HIAQYTSIIS…REQMDIRRQL (78 aa). Basic and acidic residues predominate over residues 468 to 491; the sequence is RARKWRDEHRKETYGKDDSEKDSD. Residues 468–503 are disordered; sequence RARKWRDEHRKETYGKDDSEKDSDTGDDQSDFIEPP. The stretch at 508–577 forms a coiled coil; sequence ARETIQILEG…ELEIENTEMQ (70 aa). Disordered regions lie at residues 662–690, 792–811, and 848–890; these read NLTA…RNPI, GDRL…SMSE, and GGGS…SRSF. Basic and acidic residues-rich tracts occupy residues 792-802 and 869-880; these read GDRLQPMKERS and QKLEKREESLEV. A coiled-coil region spans residues 861–889; sequence HRTQKKQAQKLEKREESLEVKRRKKRSRS.

The protein belongs to the TRAFAC class myosin-kinesin ATPase superfamily. Kinesin family.

Its subcellular location is the cytoplasm. It localises to the cytoskeleton. The protein resides in the cell projection. It is found in the cilium. Functionally, plus end-directed microtubule-dependent motor protein that regulates the length of motile cilia by mediating depolymerization of microtubules at ciliary tips. This is Kinesin-like protein KIF19 (kif19) from Xenopus laevis (African clawed frog).